Here is a 506-residue protein sequence, read N- to C-terminus: Maturase K (506 aa).

This sequence belongs to the intron maturase 2 family. MatK subfamily.

The protein resides in the plastid. Its subcellular location is the chloroplast. Usually encoded in the trnK tRNA gene intron. Probably assists in splicing its own and other chloroplast group II introns. The chain is Maturase K from Mentzelia lindleyi (Blazing star).